The following is a 410-amino-acid chain: MDKLLDRFLNYVSFDTQSKSGVRQVPSTDGQLKLARALQQELLELGFEQVVLSKQGCLMATLPANVAWPVPAIGFISHMDTSPDFSGKNVNPQILENYRGGDIALGVGDEVLSPVMFPVLHQLLGHTLITTDGKTLLGADDKAGIAEIMTALVRLKKSQLPHGDIRVAFTPDEEIGKGAQFFDVKAFNAQWAYTVDGGGVGELEYENFNAASVQVKIVGNNVHPGSAKGVMVNALTLASRYHQQVPESQSPEQTDGYQGFYHLHSMKGSVERADLHYIVRDFDRNGFEQRKQTMLDIAEKVGAGLHPDCYIEVTITDTYYNMREQVEQHPHIIALAQQAMRDCDIEPNMKPIRGGTDGAHLSFQGLPCPNLFTGGYNYHGKHEFVTLEGMEKAVSVIMRIAELTALRAKP.

His78 contacts Zn(2+). Asp80 is a catalytic residue. Asp140 is a binding site for Zn(2+). Glu173 (proton acceptor) is an active-site residue. Glu174, Asp196, and His379 together coordinate Zn(2+).

The protein belongs to the peptidase M20B family. It depends on Zn(2+) as a cofactor.

The protein resides in the cytoplasm. It carries out the reaction Release of the N-terminal residue from a tripeptide.. Cleaves the N-terminal amino acid of tripeptides. In Pectobacterium carotovorum subsp. carotovorum (strain PC1), this protein is Peptidase T.